The following is a 216-amino-acid chain: MIF4G domain-containing protein A (216 aa).

The MIF4G domain maps to 2 to 199; that stretch reads DSAWTALDME…LEILEFRASG (198 aa).

Belongs to the MIF4GD family. Interacts with eif4g1, eif4g2 and slbp; probably tethered by SLBP to the 3'-end of mRNAs ending with the histone stem-loop, it also interacts with eif4g1 which is bound to their 5'-end.

The protein resides in the cytoplasm. The protein localises to the nucleus. Functionally, functions in replication-dependent translation of histone mRNAs which differ from other eukaryotic mRNAs in that they do not end with a poly-A tail but a stem-loop. May participate in circularizing those mRNAs specifically enhancing their translation. This chain is MIF4G domain-containing protein A (mif4gda), found in Danio rerio (Zebrafish).